A 291-amino-acid chain; its full sequence is MAGSLSEIKAKINSTEKTSKITSAMRMVSSAKLVKSEQSARDFQIYASKIRQITTDLLKAELTSGSTNPMLVSRPVKKTGYIVITSDKGLVGGYNSKILKSVMEMIEEYHADGSYSIISIGSVGSDFFKARGMNVSFELRGLADQPSFEEVGKIISQSVAMYQNEIFDELYVCYNHHVNSLTSQVRVQQMLPISDLVAEEANDEGVVGFELEPDRDTILNQLLPQFTESLIYGAIIDAKTAEHAAGMTAMQTATDNAKNVINDLTIQYNRARQAAITQEITEIVAGANALE.

Belongs to the ATPase gamma chain family. F-type ATPases have 2 components, CF(1) - the catalytic core - and CF(0) - the membrane proton channel. CF(1) has five subunits: alpha(3), beta(3), gamma(1), delta(1), epsilon(1). CF(0) has three main subunits: a, b and c.

The protein localises to the cell membrane. Its function is as follows. Produces ATP from ADP in the presence of a proton gradient across the membrane. The gamma chain is believed to be important in regulating ATPase activity and the flow of protons through the CF(0) complex. The sequence is that of ATP synthase gamma chain from Streptococcus uberis (strain ATCC BAA-854 / 0140J).